The chain runs to 121 residues: Small ribosomal subunit protein uS13 (121 aa).

The tract at residues 94–121 (GLPVRGQRTRTNARTRKGKRKTVAGKKK) is disordered.

It belongs to the universal ribosomal protein uS13 family. Part of the 30S ribosomal subunit. Forms a loose heterodimer with protein S19. Forms two bridges to the 50S subunit in the 70S ribosome.

Its function is as follows. Located at the top of the head of the 30S subunit, it contacts several helices of the 16S rRNA. In the 70S ribosome it contacts the 23S rRNA (bridge B1a) and protein L5 of the 50S subunit (bridge B1b), connecting the 2 subunits; these bridges are implicated in subunit movement. Contacts the tRNAs in the A and P-sites. The protein is Small ribosomal subunit protein uS13 of Treponema pallidum (strain Nichols).